A 239-amino-acid chain; its full sequence is MSILDIHDVSVWYERDNVILEQVDLHLEKGAVYGLLGVNGAGKTTLINTLTGVNRNFSGRFTLCGIEAEAGMPQKTSDQLKTHRYFAADYPLLFTEITAKDYVSFVHSLYQKDFSEQQFASLAEAFHFSKYINRRISELSLGNRQKVVLMTGLLLRAPLFILDEPLVGLDVESIEVFYQKMREYCEAGGTILFSSHLLDVVQRFCDYAAILHNKQIQKVIPIGEETDLRREFFEVIGHE.

In terms of domain architecture, ABC transporter spans leucine 4 to histidine 238. Residue glycine 37–threonine 44 coordinates ATP.

It belongs to the ABC transporter superfamily.

Functionally, involved in the production of the bacteriocin subtilosin. Required for immunity to subtilosin. The polypeptide is Putative ABC transporter ATP-binding protein AlbC (albC) (Bacillus subtilis (strain 168)).